The following is a 235-amino-acid chain: Vacuolar protein sorting-associated protein 60.2 (235 aa).

The tract at residues 1-30 (MKRIFGAKNNKEPPPSIQDASDRINKRGDS) is disordered. Residues 20 to 30 (ASDRINKRGDS) are compositionally biased toward basic and acidic residues. Positions 99 to 148 (LKDAQQTMTALKSANKELKGMMKTVKIQDIDNLQDDMMDLMDESSEIQET) form a coiled coil. The interval 174–235 (DMGNETEADG…PAVPRASLRG (62 aa)) is disordered.

Belongs to the SNF7 family.

It is found in the endosome. It localises to the multivesicular body membrane. Probable peripherally associated component of the endosomal sorting required for transport complex III (ESCRT-III) which is involved in multivesicular bodies (MVBs) formation and sorting of endosomal cargo proteins into MVBs. This is Vacuolar protein sorting-associated protein 60.2 from Arabidopsis thaliana (Mouse-ear cress).